The chain runs to 314 residues: Lipoyl synthase (314 aa).

[4Fe-4S] cluster contacts are provided by cysteine 61, cysteine 66, cysteine 72, cysteine 87, cysteine 91, cysteine 94, and serine 301. The Radical SAM core domain maps to 73–290 (FGRGTATFMI…ERIATNLGFS (218 aa)).

This sequence belongs to the radical SAM superfamily. Lipoyl synthase family. [4Fe-4S] cluster serves as cofactor.

The protein localises to the cytoplasm. The catalysed reaction is [[Fe-S] cluster scaffold protein carrying a second [4Fe-4S](2+) cluster] + N(6)-octanoyl-L-lysyl-[protein] + 2 oxidized [2Fe-2S]-[ferredoxin] + 2 S-adenosyl-L-methionine + 4 H(+) = [[Fe-S] cluster scaffold protein] + N(6)-[(R)-dihydrolipoyl]-L-lysyl-[protein] + 4 Fe(3+) + 2 hydrogen sulfide + 2 5'-deoxyadenosine + 2 L-methionine + 2 reduced [2Fe-2S]-[ferredoxin]. It functions in the pathway protein modification; protein lipoylation via endogenous pathway; protein N(6)-(lipoyl)lysine from octanoyl-[acyl-carrier-protein]: step 2/2. Functionally, catalyzes the radical-mediated insertion of two sulfur atoms into the C-6 and C-8 positions of the octanoyl moiety bound to the lipoyl domains of lipoate-dependent enzymes, thereby converting the octanoylated domains into lipoylated derivatives. In Nitrosomonas eutropha (strain DSM 101675 / C91 / Nm57), this protein is Lipoyl synthase.